The primary structure comprises 349 residues: Core protein VP7 (349 aa).

N-linked (GlcNAc...) asparagine; by host glycans are attached at residues N148 and N287.

The protein belongs to the orbivirus VP7 family.

The protein localises to the virion. The VP7 protein is one of the five proteins (with VP1, VP3, VP4, and VP6) which form the inner capsid of the virus. The sequence is that of Core protein VP7 (Segment-7) from Epizootic hemorrhagic disease virus 1 (EHDV-1).